Reading from the N-terminus, the 195-residue chain is Imidazoleglycerol-phosphate dehydratase (195 aa).

This sequence belongs to the imidazoleglycerol-phosphate dehydratase family.

It is found in the cytoplasm. It catalyses the reaction D-erythro-1-(imidazol-4-yl)glycerol 3-phosphate = 3-(imidazol-4-yl)-2-oxopropyl phosphate + H2O. The protein operates within amino-acid biosynthesis; L-histidine biosynthesis; L-histidine from 5-phospho-alpha-D-ribose 1-diphosphate: step 6/9. The polypeptide is Imidazoleglycerol-phosphate dehydratase (Parafrankia sp. (strain EAN1pec)).